The chain runs to 319 residues: ATP-dependent 6-phosphofructokinase (319 aa).

Position 11 (glycine 11) interacts with ATP. Residue 21-25 (RAVVR) coordinates ADP. Residues 72-73 (RS) and 102-105 (GDGS) each bind ATP. Aspartate 103 contacts Mg(2+). Substrate is bound at residue 125–127 (TID). Aspartate 127 (proton acceptor) is an active-site residue. ADP is bound at residue arginine 154. Residues arginine 162 and 169-171 (MGR) contribute to the substrate site. ADP is bound by residues 185–187 (GAE) and 213–215 (KMH). Substrate-binding positions include glutamate 222, arginine 243, and 249–252 (HIQR).

The protein belongs to the phosphofructokinase type A (PFKA) family. ATP-dependent PFK group I subfamily. Prokaryotic clade 'B1' sub-subfamily. Homotetramer. The cofactor is Mg(2+).

Its subcellular location is the cytoplasm. It catalyses the reaction beta-D-fructose 6-phosphate + ATP = beta-D-fructose 1,6-bisphosphate + ADP + H(+). Its pathway is carbohydrate degradation; glycolysis; D-glyceraldehyde 3-phosphate and glycerone phosphate from D-glucose: step 3/4. Its activity is regulated as follows. Allosterically activated by ADP and other diphosphonucleosides, and allosterically inhibited by phosphoenolpyruvate. Catalyzes the phosphorylation of D-fructose 6-phosphate to fructose 1,6-bisphosphate by ATP, the first committing step of glycolysis. The chain is ATP-dependent 6-phosphofructokinase from Clostridium tetani (strain Massachusetts / E88).